A 152-amino-acid chain; its full sequence is Superoxide dismutase [Cu-Zn] (152 aa).

Cysteine 7 is lipidated: S-palmitoyl cysteine. Residues histidine 47, histidine 49, and histidine 64 each coordinate Cu cation. An intrachain disulfide couples cysteine 58 to cysteine 146. Histidine 64, histidine 72, histidine 81, and aspartate 84 together coordinate Zn(2+). Histidine 120 serves as a coordination point for Cu cation.

Belongs to the Cu-Zn superoxide dismutase family. Homodimer. Requires Cu cation as cofactor. Zn(2+) serves as cofactor.

The protein resides in the cytoplasm. It localises to the nucleus. The catalysed reaction is 2 superoxide + 2 H(+) = H2O2 + O2. Destroys radicals which are normally produced within the cells and which are toxic to biological systems. The chain is Superoxide dismutase [Cu-Zn] (sod1) from Xiphias gladius (Swordfish).